The sequence spans 263 residues: Glutamate racemase (263 aa).

Residues 12-13 and 44-45 contribute to the substrate site; these read DS and YG. Cys75 acts as the Proton donor/acceptor in catalysis. 76–77 contributes to the substrate binding site; sequence NT. The active-site Proton donor/acceptor is Cys186. 187–188 contacts substrate; sequence TH.

Belongs to the aspartate/glutamate racemases family.

The enzyme catalyses L-glutamate = D-glutamate. Its pathway is cell wall biogenesis; peptidoglycan biosynthesis. Functionally, provides the (R)-glutamate required for cell wall biosynthesis. The chain is Glutamate racemase from Ectopseudomonas mendocina (strain ymp) (Pseudomonas mendocina).